The chain runs to 420 residues: F-box/LRR-repeat protein At2g43260 (420 aa).

The 47-residue stretch at 7-53 (NPNSIDILPELLEEVLLRLPTKSILKCRIVSKQWRSLLESSRFAERH) folds into the F-box domain. LRR repeat units follow at residues 112-135 (QDWIIVLNPSTSQLRRFPSGLNHN) and 226-251 (VYRILALDLHKEEFHKVPVPPTQITV).

This is F-box/LRR-repeat protein At2g43260 from Arabidopsis thaliana (Mouse-ear cress).